A 70-amino-acid chain; its full sequence is Small ribosomal subunit protein bS21 (70 aa).

The protein belongs to the bacterial ribosomal protein bS21 family.

The polypeptide is Small ribosomal subunit protein bS21 (Albidiferax ferrireducens (strain ATCC BAA-621 / DSM 15236 / T118) (Rhodoferax ferrireducens)).